Reading from the N-terminus, the 173-residue chain is Adenine phosphoribosyltransferase (173 aa).

Belongs to the purine/pyrimidine phosphoribosyltransferase family. Homodimer.

It is found in the cytoplasm. The enzyme catalyses AMP + diphosphate = 5-phospho-alpha-D-ribose 1-diphosphate + adenine. The protein operates within purine metabolism; AMP biosynthesis via salvage pathway; AMP from adenine: step 1/1. Its function is as follows. Catalyzes a salvage reaction resulting in the formation of AMP, that is energically less costly than de novo synthesis. This Chloroflexus aurantiacus (strain ATCC 29366 / DSM 635 / J-10-fl) protein is Adenine phosphoribosyltransferase.